A 647-amino-acid polypeptide reads, in one-letter code: Threonine--tRNA ligase (647 aa).

Residues 1 to 61 (MIKITFPDGA…EEDGSIEIVT (61 aa)) enclose the TGS domain. Residues 240-538 (DHRKLGKELD…LIETYKGAFP (299 aa)) form a catalytic region. 3 residues coordinate Zn(2+): cysteine 334, histidine 385, and histidine 515.

Belongs to the class-II aminoacyl-tRNA synthetase family. Homodimer. The cofactor is Zn(2+).

The protein localises to the cytoplasm. The enzyme catalyses tRNA(Thr) + L-threonine + ATP = L-threonyl-tRNA(Thr) + AMP + diphosphate + H(+). In terms of biological role, catalyzes the attachment of threonine to tRNA(Thr) in a two-step reaction: L-threonine is first activated by ATP to form Thr-AMP and then transferred to the acceptor end of tRNA(Thr). Also edits incorrectly charged L-seryl-tRNA(Thr). In Streptococcus pyogenes serotype M4 (strain MGAS10750), this protein is Threonine--tRNA ligase.